The primary structure comprises 380 residues: Crotonobetainyl-CoA reductase (380 aa).

The protein belongs to the acyl-CoA dehydrogenase family. Homotetramer. The cofactor is FAD.

It localises to the cytoplasm. The enzyme catalyses 4-(trimethylamino)butanoyl-CoA + oxidized [electron-transfer flavoprotein] + H(+) = crotonobetainyl-CoA + reduced [electron-transfer flavoprotein]. The protein operates within amine and polyamine metabolism; carnitine metabolism. Its function is as follows. Catalyzes the reduction of crotonobetainyl-CoA to gamma-butyrobetainyl-CoA. The protein is Crotonobetainyl-CoA reductase of Salmonella arizonae (strain ATCC BAA-731 / CDC346-86 / RSK2980).